The following is a 272-amino-acid chain: Pyrroline-5-carboxylate reductase 3 (272 aa).

The protein belongs to the pyrroline-5-carboxylate reductase family.

The protein resides in the cytoplasm. The enzyme catalyses L-proline + NADP(+) = (S)-1-pyrroline-5-carboxylate + NADPH + 2 H(+). It carries out the reaction L-proline + NAD(+) = (S)-1-pyrroline-5-carboxylate + NADH + 2 H(+). It functions in the pathway amino-acid biosynthesis; L-proline biosynthesis; L-proline from L-glutamate 5-semialdehyde: step 1/1. Its function is as follows. Catalyzes the reduction of 1-pyrroline-5-carboxylate (PCA) to L-proline. The sequence is that of Pyrroline-5-carboxylate reductase 3 (proG) from Bacillus subtilis (strain 168).